A 447-amino-acid chain; its full sequence is Cobyrinate a,c-diamide synthase (447 aa).

In terms of domain architecture, GATase cobBQ-type spans 252 to 439 (KIAIAFDESF…AHQHAVGNPY (188 aa)). The active-site Nucleophile is the Cys-331.

The protein belongs to the CobB/CbiA family. Requires Mg(2+) as cofactor.

The enzyme catalyses cob(II)yrinate + 2 L-glutamine + 2 ATP + 2 H2O = cob(II)yrinate a,c diamide + 2 L-glutamate + 2 ADP + 2 phosphate + 2 H(+). It catalyses the reaction Ni-sirohydrochlorin + 2 L-glutamine + 2 ATP + 2 H2O = Ni-sirohydrochlorin a,c-diamide + 2 L-glutamate + 2 ADP + 2 phosphate + 2 H(+). It functions in the pathway cofactor biosynthesis; adenosylcobalamin biosynthesis; cob(II)yrinate a,c-diamide from sirohydrochlorin (anaerobic route): step 10/10. Functionally, catalyzes the ATP-dependent amidation of the two carboxylate groups at positions a and c of cobyrinate, using either L-glutamine or ammonia as the nitrogen source. Involved in the biosynthesis of the unique nickel-containing tetrapyrrole coenzyme F430, the prosthetic group of methyl-coenzyme M reductase (MCR), which plays a key role in methanogenesis and anaerobic methane oxidation. Catalyzes the ATP-dependent amidation of the two carboxylate groups at positions a and c of Ni-sirohydrochlorin, using L-glutamine or ammonia as the nitrogen source. This chain is Cobyrinate a,c-diamide synthase, found in Methanococcus vannielii (strain ATCC 35089 / DSM 1224 / JCM 13029 / OCM 148 / SB).